We begin with the raw amino-acid sequence, 188 residues long: Elongation factor P (188 aa).

This sequence belongs to the elongation factor P family.

It localises to the cytoplasm. Its pathway is protein biosynthesis; polypeptide chain elongation. Functionally, involved in peptide bond synthesis. Stimulates efficient translation and peptide-bond synthesis on native or reconstituted 70S ribosomes in vitro. Probably functions indirectly by altering the affinity of the ribosome for aminoacyl-tRNA, thus increasing their reactivity as acceptors for peptidyl transferase. The polypeptide is Elongation factor P (Rickettsia peacockii (strain Rustic)).